A 352-amino-acid polypeptide reads, in one-letter code: NAD(P)H pyrophosphatase NUDT13, mitochondrial (352 aa).

The N-terminal 20 residues, 1–20 (MSLYCRTFFRRKSFGCYRLL), are a transit peptide targeting the mitochondrion. One can recognise a Nudix hydrolase domain in the interval 196-323 (PQMAPVVITL…SLALQPSEAS (128 aa)). A Nudix box motif is present at residues 216–240 (RQSSFPKGLYSALAGFCDIGESVEE).

This sequence belongs to the Nudix hydrolase family. Mg(2+) is required as a cofactor. The cofactor is Mn(2+).

Its subcellular location is the mitochondrion. It catalyses the reaction NADH + H2O = reduced beta-nicotinamide D-ribonucleotide + AMP + 2 H(+). The enzyme catalyses NAD(+) + H2O = beta-nicotinamide D-ribonucleotide + AMP + 2 H(+). It carries out the reaction NADPH + H2O = reduced beta-nicotinamide D-ribonucleotide + adenosine 2',5'-bisphosphate + 2 H(+). Functionally, NAD(P)H pyrophosphatase that hydrolyzes NADH into NMNH and AMP, and NADPH into NMNH and 2',5'-ADP. Has a marked preference for the reduced pyridine nucleotides. Does not show activity toward NAD-capped RNAs; the NAD-cap is an atypical cap present at the 5'-end of some RNAs. The polypeptide is NAD(P)H pyrophosphatase NUDT13, mitochondrial (Mus musculus (Mouse)).